The sequence spans 240 residues: Probable transcriptional regulatory protein PBPRB1582 (240 aa).

It belongs to the TACO1 family.

It is found in the cytoplasm. This Photobacterium profundum (strain SS9) protein is Probable transcriptional regulatory protein PBPRB1582.